Reading from the N-terminus, the 717-residue chain is MIHAGNAITVQMLADGIAEFRFDLQGESVNKFNRATIEDFKAAIAAVKANNDIKGLVVTSGKSTFIVGADITEFGQNFAQGEKAIVDWLMPVHEIFNSFEDLDLPKVAAINGMALGGGFEMCLVCDYRVMSEAAQVGLPEIKLGIYPGFGGSVRLSRLIGIDNAVEWMAMATPKKPAAALKDGAVDAVVAADKLLDAATDLVKQAISGRLNWKAKRQEKLEAVKLNPLEQMMAFNTAKGAVLAKANPAQYPAPKLLLDSLQAGASLARDEALKAEAEGFAKAAVTPQAEALIGLFINDQVVKKASKQHEKGAHPVNQAAVLGAGIMGGGIAYQAASKGTPIIMKDIGNPQLALGMKEANNLLTKQVERKKMKPVQMGETLARIRPTLSYEEFKEVDIVIEAVTENPKVKEIVLAETEKNVRENTIIASNTSTISITRLAKALQRPENFVGMHFFNPVHMMPLVEVIRGEKTSEEAIATTVVLAQKMGKTPIVVNDCPGFLVNRVLFPYFGAFDLLVKDGADFQQIDNVMSKFGWPMGPAYLIDVVGIDTGVHGAEVMAEGFPDRMKPDYKGAIEAMYEAKRLGQKNDVGFYKYELDKKGKKAKTVDPTAYEVIAPFVTGEKREFDNQEIIDRMMLALCNETVRCLEDNIVATASEADMAMIMGIGFPPFRGGPCRYIDQTGVAEYVALCDKYAHLGKAYEAPQMLRDMAANNKKFYG.

An enoyl-CoA hydratase/isomerase region spans residues 1-190 (MIHAGNAITV…KDGAVDAVVA (190 aa)). D298 provides a ligand contact to substrate. Residues 313–717 (HPVNQAAVLG…MAANNKKFYG (405 aa)) are 3-hydroxyacyl-CoA dehydrogenase. NAD(+) contacts are provided by residues M326, D345, 402–404 (VTE), K409, and S431. Residue H452 is the For 3-hydroxyacyl-CoA dehydrogenase activity of the active site. N455 is an NAD(+) binding site. A substrate-binding site is contributed by N502.

In the N-terminal section; belongs to the enoyl-CoA hydratase/isomerase family. The protein in the C-terminal section; belongs to the 3-hydroxyacyl-CoA dehydrogenase family. Heterotetramer of two alpha chains (FadB) and two beta chains (FadA).

It carries out the reaction a (3S)-3-hydroxyacyl-CoA + NAD(+) = a 3-oxoacyl-CoA + NADH + H(+). The enzyme catalyses a (3S)-3-hydroxyacyl-CoA = a (2E)-enoyl-CoA + H2O. The catalysed reaction is a 4-saturated-(3S)-3-hydroxyacyl-CoA = a (3E)-enoyl-CoA + H2O. It catalyses the reaction (3S)-3-hydroxybutanoyl-CoA = (3R)-3-hydroxybutanoyl-CoA. It carries out the reaction a (3Z)-enoyl-CoA = a 4-saturated (2E)-enoyl-CoA. The enzyme catalyses a (3E)-enoyl-CoA = a 4-saturated (2E)-enoyl-CoA. It functions in the pathway lipid metabolism; fatty acid beta-oxidation. Its function is as follows. Involved in the aerobic and anaerobic degradation of long-chain fatty acids via beta-oxidation cycle. Catalyzes the formation of 3-oxoacyl-CoA from enoyl-CoA via L-3-hydroxyacyl-CoA. It can also use D-3-hydroxyacyl-CoA and cis-3-enoyl-CoA as substrate. This chain is Fatty acid oxidation complex subunit alpha, found in Acinetobacter baumannii (strain AB307-0294).